A 1064-amino-acid chain; its full sequence is Carbamoyl phosphate synthase large chain (1064 aa).

The tract at residues 1–401 (MPKRNDIKKI…SLLKAVRSLE (401 aa)) is carboxyphosphate synthetic domain. Positions 129, 169, 175, 176, 208, 210, 215, 241, 242, 243, 284, and 298 each coordinate ATP. Positions 133 to 327 (KELCESINEP…IAKMSAKIAI (195 aa)) constitute an ATP-grasp 1 domain. Mg(2+)-binding residues include glutamine 284, glutamate 298, and asparagine 300. Residues glutamine 284, glutamate 298, and asparagine 300 each contribute to the Mn(2+) site. Residues 402 to 546 (IGVFHNEMTE…YSTYEWENES (145 aa)) are oligomerization domain. The interval 547–929 (KRSDKEKIIV…ALYKSFEAAK (383 aa)) is carbamoyl phosphate synthetic domain. The region spanning 671-861 (EKALQDLDIP…MAQLATQMIL (191 aa)) is the ATP-grasp 2 domain. Arginine 707, serine 746, leucine 748, glutamate 752, glycine 777, valine 778, histidine 779, serine 780, glutamine 820, and glutamate 832 together coordinate ATP. Residues glutamine 820, glutamate 832, and asparagine 834 each coordinate Mg(2+). Mn(2+) contacts are provided by glutamine 820, glutamate 832, and asparagine 834. An MGS-like domain is found at 930-1064 (LHMADYGSVL…QSRSFTTKNI (135 aa)). The segment at 930-1064 (LHMADYGSVL…QSRSFTTKNI (135 aa)) is allosteric domain.

Belongs to the CarB family. In terms of assembly, composed of two chains; the small (or glutamine) chain promotes the hydrolysis of glutamine to ammonia, which is used by the large (or ammonia) chain to synthesize carbamoyl phosphate. Tetramer of heterodimers (alpha,beta)4. Requires Mg(2+) as cofactor. The cofactor is Mn(2+).

It carries out the reaction hydrogencarbonate + L-glutamine + 2 ATP + H2O = carbamoyl phosphate + L-glutamate + 2 ADP + phosphate + 2 H(+). The enzyme catalyses hydrogencarbonate + NH4(+) + 2 ATP = carbamoyl phosphate + 2 ADP + phosphate + 2 H(+). It functions in the pathway amino-acid biosynthesis; L-arginine biosynthesis; carbamoyl phosphate from bicarbonate: step 1/1. Its pathway is pyrimidine metabolism; UMP biosynthesis via de novo pathway; (S)-dihydroorotate from bicarbonate: step 1/3. In terms of biological role, large subunit of the glutamine-dependent carbamoyl phosphate synthetase (CPSase). CPSase catalyzes the formation of carbamoyl phosphate from the ammonia moiety of glutamine, carbonate, and phosphate donated by ATP, constituting the first step of 2 biosynthetic pathways, one leading to arginine and/or urea and the other to pyrimidine nucleotides. The large subunit (synthetase) binds the substrates ammonia (free or transferred from glutamine from the small subunit), hydrogencarbonate and ATP and carries out an ATP-coupled ligase reaction, activating hydrogencarbonate by forming carboxy phosphate which reacts with ammonia to form carbamoyl phosphate. This is Carbamoyl phosphate synthase large chain from Lactococcus lactis subsp. cremoris (strain SK11).